A 106-amino-acid chain; its full sequence is Iron-sulfur cluster assembly protein CyaY (106 aa).

Belongs to the frataxin family.

Functionally, involved in iron-sulfur (Fe-S) cluster assembly. May act as a regulator of Fe-S biogenesis. This chain is Iron-sulfur cluster assembly protein CyaY, found in Dickeya chrysanthemi (Pectobacterium chrysanthemi).